A 472-amino-acid polypeptide reads, in one-letter code: Glutamine synthetase (472 aa).

The GS beta-grasp domain maps to 13-101 (SKARFVDLRF…TCDVIDPADG (89 aa)). The GS catalytic domain maps to 108–472 (PRSIARRAEA…PLEFEMYYSL (365 aa)). Residues Glu133 and Glu135 each coordinate Mg(2+). Glu211 serves as a coordination point for ATP. The Mg(2+) site is built by Glu216 and Glu224. L-glutamate is bound by residues 268–269 (NG) and Gly269. His273 serves as a coordination point for Mg(2+). Residues 275–277 (HQS) and Ser277 each bind ATP. The L-glutamate site is built by Arg325, Glu331, and Arg343. Positions 343, 348, and 356 each coordinate ATP. Glu361 is a Mg(2+) binding site. Arg363 is a binding site for L-glutamate. O-AMP-tyrosine is present on Tyr401.

It belongs to the glutamine synthetase family. As to quaternary structure, oligomer of 12 subunits arranged in the form of two hexameric ring. Mg(2+) is required as a cofactor.

It localises to the cytoplasm. The enzyme catalyses L-glutamate + NH4(+) + ATP = L-glutamine + ADP + phosphate + H(+). With respect to regulation, the activity of this enzyme could be controlled by adenylation under conditions of abundant glutamine. Functionally, catalyzes the ATP-dependent biosynthesis of glutamine from glutamate and ammonia. The chain is Glutamine synthetase from Neisseria gonorrhoeae.